The chain runs to 128 residues: Early 4 ORF1 protein (128 aa).

Topologically, residues 1–26 are cytoplasmic; sequence MAAAVEALYVVLEREGAILPRQEGFS. The helical transmembrane segment at 27–47 threads the bilayer; the sequence is GVYVFFSPINFVIPPMGAVML. At 48–99 the chain is on the extracellular side; sequence SLRLRVCIPPGYFGRFLALTDVNQPDVFTESYIMTPDMTEELSVVLFNHGDQ. The helical transmembrane segment at 100-120 threads the bilayer; sequence FFYGHAGMAVVRLMLIRVVFP. Over 121 to 128 the chain is Cytoplasmic; the sequence is VVRQASNV. Positions 125-128 match the PBZ domain binding motif motif; the sequence is ASNV.

The protein belongs to the adenoviridae E4-ORF1 family. In terms of assembly, may interact with host PDZ proteins through the PDZ domain binding motif (PBM), namely host DLG1, PATJ and TJP2.

The protein resides in the host membrane. May modulate tight-junctions functions of infected cells through interactions with PDZ proteins. E4 ORF1 has ben show for Adenovirus 9 to interact with protein involved in tight junction regulation. May play a role in mTOR activation by activating PI3-kinase, thus overriding cellular checkpoint for translation. The protein is Early 4 ORF1 protein of Human adenovirus C serotype 2 (HAdV-2).